Here is a 630-residue protein sequence, read N- to C-terminus: MAAGVAAWLPFARAAAIGWMPVASGPMPAPPRQERKRTQDALIVLNVSGTRFQTWQDTLERYPDTLLGSSERDFFYHPETQQYFFDRDPDIFRHILNFYRTGKLHYPRHECISAYDEELAFFGLIPEIIGDCCYEEYKDRRRENAERLQDDADTDNTGESALPTMTARQRVWRAFENPHTSTMALVFYYVTGFFIAVSVIANVVETVPCGSSPGHIKELPCGERYAVAFFCLDTACVMIFTVEYLLRLAAAPSRYRFVRSVMSIIDVVAILPYYIGLVMTDNEDVSGAFVTLRVFRVFRIFKFSRHSQGLRILGYTLKSCASELGFLLFSLTMAIIIFATVMFYAEKGSSASKFTSIPAAFWYTIVTMTTLGYGDMVPKTIAGKIFGSICSLSGVLVIALPVPVIVSNFSRIYHQNQRADKRRAQKKARLARIRAAKTGSANAYMQSKRNGLLSNQLQSSEDEQAFVSKSGSSFETQHHHLLHCLEKTTNHEFVDEQVFEESCMEVATGNRPSSHSPSLSSQQGVTSTCCSRRHKKTFRIPNANVSGSHRGSVQELSTIQIRCVERTPLSNSRSSLNAKMEECVKLNCEQPYVTTAIISIPTPPVTTPEGDDRPESPEYSGGNIVRVSAL.

Over 1 to 184 the chain is Cytoplasmic; sequence MAAGVAAWLP…FENPHTSTMA (184 aa). Residues 2–20 are interaction with KCNIP1, KCNIP2, and other family members; it reads AAGVAAWLPFARAAAIGWM. T38 is modified (phosphothreonine). Residues 71–90 are interaction with KCNIP1; that stretch reads ERDFFYHPETQQYFFDRDPD. Positions 105, 111, 132, and 133 each coordinate Zn(2+). The chain crosses the membrane as a helical span at residues 185-206; it reads LVFYYVTGFFIAVSVIANVVET. Residues 207 to 226 lie on the Extracellular side of the membrane; it reads VPCGSSPGHIKELPCGERYA. A helical membrane pass occupies residues 227–249; the sequence is VAFFCLDTACVMIFTVEYLLRLA. Over 250–256 the chain is Cytoplasmic; the sequence is AAPSRYR. Residues 257–281 traverse the membrane as a helical segment; the sequence is FVRSVMSIIDVVAILPYYIGLVMTD. The Extracellular segment spans residues 282–287; it reads NEDVSG. The chain crosses the membrane as a helical; Voltage-sensor span at residues 288 to 307; it reads AFVTLRVFRVFRIFKFSRHS. Topologically, residues 308 to 321 are cytoplasmic; it reads QGLRILGYTLKSCA. An S4-S5 linker region spans residues 308 to 321; that stretch reads QGLRILGYTLKSCA. The helical transmembrane segment at 322–345 threads the bilayer; it reads SELGFLLFSLTMAIIIFATVMFYA. Topologically, residues 346-357 are extracellular; the sequence is EKGSSASKFTSI. The helical intramembrane region spans 358-369; that stretch reads PAAFWYTIVTMT. K(+) is bound by residues T370, L371, G372, and Y373. A Selectivity filter motif is present at residues 370–375; sequence TLGYGD. An intramembrane segment occupies 370–377; sequence TLGYGDMV. At 378 to 380 the chain is on the extracellular side; the sequence is PKT. A helical membrane pass occupies residues 381–403; that stretch reads IAGKIFGSICSLSGVLVIALPVP. Topologically, residues 404–630 are cytoplasmic; it reads VIVSNFSRIY…GGNIVRVSAL (227 aa). A required for dendritic targeting region spans residues 474–489; the sequence is FETQHHHLLHCLEKTT. Positions 474–630 are important for normal channel activation and inactivation, for interaction with KCNIP2, and probably other family members as well; that stretch reads FETQHHHLLH…GGNIVRVSAL (157 aa). Residues S548, S552, S572, and S575 each carry the phosphoserine modification. The disordered stretch occupies residues 600–622; that stretch reads IPTPPVTTPEGDDRPESPEYSGG. Phosphothreonine is present on residues T602 and T607. S616 carries the phosphoserine modification. The PDZ-binding signature appears at 627–630; the sequence is VSAL.

The protein belongs to the potassium channel family. D (Shal) (TC 1.A.1.2) subfamily. Kv4.2/KCND2 sub-subfamily. In terms of assembly, homotetramer or heterotetramer with KCND1 or KCND3. Associates with the regulatory subunits KCNIP2, KCNIP3 and KCNIP4. Interacts with the regulatory subunit KCNIP1; this interaction mediates the capture of both the N- and C-terminus of KCND2, preventing N-type inactivation and stabilizing the S6 conformation, thereby accelerating closed state inactivation and recovery. In vivo, probably exists as heteromeric complex containing variable proportions of KCND1, KCND2, KCND3, KCNIP1, KCNIP2, KCNIP3, KCNIP4, DPP6 and DPP10. The tetrameric channel can associate with up to four regulatory subunits, such as KCNIP2 or KCNIP4. Interaction with four KCNIP4 chains does not reduce interaction with DPP10. Interacts with DLG4 and NCS1/FREQ. Interacts with DLG1. Probably part of a complex consisting of KCNIP1, KCNIP2 isoform 3 and KCND2. Interacts with FLNA, FLNC and DPP10. Identified in a complex with cAMP-dependent protein kinase (PKA), CAV3, AKAP6 and KCND3 in cardiac myocytes. Interacts (via S1 and S2 helices) with DPP6; this interaction stabilizes the conformation of the S1-S2 helices and facilitates S4 conformational change, including S4 sliding up and down, thereby accelerating activation, inactivation, and recovery. In terms of processing, phosphorylation in response to MAPK activation is increased in stimulated dendrites. Interaction with KCNIP2 and DPP6 propomtes phosphorylation by PKA at Ser-552. Phosphorylation at Ser-552 has no effect on interaction with KCNIP3, but is required for the regulation of channel activity by KCNIP3. Phosphorylation at Ser-552 leads to KCND2 internalization. Phosphorylated by MAPK in response to signaling via the metabotropic glutamate receptor GRM5. Phosphorylation at Ser-616 is required for the down-regulation of neuronal A-type currents in response to signaling via GRM5.

Its subcellular location is the cell membrane. The protein resides in the cell projection. It is found in the dendrite. It localises to the synapse. The protein localises to the perikaryon. Its subcellular location is the postsynaptic cell membrane. The protein resides in the dendritic spine. It is found in the sarcolemma. It localises to the cell junction. The protein localises to the membrane. Its subcellular location is the caveola. It carries out the reaction K(+)(in) = K(+)(out). In terms of biological role, voltage-gated potassium channel that mediates transmembrane potassium transport in excitable membranes, primarily in the brain, but also in rodent heart. Mediates the major part of the dendritic A-type current I(SA) in brain neurons. This current is activated at membrane potentials that are below the threshold for action potentials. It regulates neuronal excitability, prolongs the latency before the first spike in a series of action potentials, regulates the frequency of repetitive action potential firing, shortens the duration of action potentials and regulates the back-propagation of action potentials from the neuronal cell body to the dendrites. Contributes to the regulation of the circadian rhythm of action potential firing in suprachiasmatic nucleus neurons, which regulates the circadian rhythm of locomotor activity. Functions downstream of the metabotropic glutamate receptor GRM5 and plays a role in neuronal excitability and in nociception mediated by activation of GRM5. Mediates the transient outward current I(to) in rodent heart left ventricle apex cells, but not in human heart, where this current is mediated by another family member. Forms tetrameric potassium-selective channels through which potassium ions pass in accordance with their electrochemical gradient. The channel alternates between opened and closed conformations in response to the voltage difference across the membrane. Can form functional homotetrameric channels and heterotetrameric channels that contain variable proportions of KCND2 and KCND3; channel properties depend on the type of pore-forming alpha subunits that are part of the channel. In vivo, membranes probably contain a mixture of heteromeric potassium channel complexes. Interaction with specific isoforms of the regulatory subunits KCNIP1, KCNIP2, KCNIP3 or KCNIP4 strongly increases expression at the cell surface and thereby increases channel activity; it modulates the kinetics of channel activation and inactivation, shifts the threshold for channel activation to more negative voltage values, shifts the threshold for inactivation to less negative voltages and accelerates recovery after inactivation. Likewise, interaction with DPP6 or DPP10 promotes expression at the cell membrane and regulates both channel characteristics and activity. Upon depolarization, the channel goes from a resting closed state (C state) to an activated but non-conducting state (C* state), from there, the channel may either inactivate (I state) or open (O state). In Mustela putorius furo (European domestic ferret), this protein is A-type voltage-gated potassium channel KCND2.